The following is a 361-amino-acid chain: MSKRAFNFCAGPAALPDAVLQRAQAEMLDWRGKGLSVMEMSHRSDDYVAIAEKAEQDLRDLLSVPSNYKVLFLQGGASQQFAEIPLNLLPENGTADYIETGIWSKKAIEEARRFGNVNVAATAKPYDYLAIPGQNEWNLTKNAAYVHYASNETIGGLQFDWVPQTGDVPLVVDMSSDILSRPIDVSQFGLIYAGAQKNIGPSGLVVVIVREDLLGHARSSCPTMLDYKVSADNGSMYNTPATYSWYLSGLVFEWLKEQGGVEAMEQRNRAKKDRLYGFIDRSEFYTNPISVNARSWMNVPFRLADERLDKAFLAGADARGLLNLKGHRSVGGMRASIYNALGLEAVEALVGYMAEFEKEHG.

Arg-43 provides a ligand contact to L-glutamate. Pyridoxal 5'-phosphate-binding positions include Ala-77–Ser-78, Trp-103, Thr-153, Asp-173, and Gln-196. The residue at position 197 (Lys-197) is an N6-(pyridoxal phosphate)lysine. Pyridoxal 5'-phosphate is bound at residue Asn-238–Thr-239.

Belongs to the class-V pyridoxal-phosphate-dependent aminotransferase family. SerC subfamily. As to quaternary structure, homodimer. Pyridoxal 5'-phosphate serves as cofactor.

The protein localises to the cytoplasm. It carries out the reaction O-phospho-L-serine + 2-oxoglutarate = 3-phosphooxypyruvate + L-glutamate. The enzyme catalyses 4-(phosphooxy)-L-threonine + 2-oxoglutarate = (R)-3-hydroxy-2-oxo-4-phosphooxybutanoate + L-glutamate. It functions in the pathway amino-acid biosynthesis; L-serine biosynthesis; L-serine from 3-phospho-D-glycerate: step 2/3. The protein operates within cofactor biosynthesis; pyridoxine 5'-phosphate biosynthesis; pyridoxine 5'-phosphate from D-erythrose 4-phosphate: step 3/5. Catalyzes the reversible conversion of 3-phosphohydroxypyruvate to phosphoserine and of 3-hydroxy-2-oxo-4-phosphonooxybutanoate to phosphohydroxythreonine. The protein is Phosphoserine aminotransferase of Pseudomonas putida (strain ATCC 47054 / DSM 6125 / CFBP 8728 / NCIMB 11950 / KT2440).